The sequence spans 342 residues: tRNA-specific 2-thiouridylase MnmA (342 aa).

Residues 6 to 13 (LLSGGVDS) and leucine 32 each bind ATP. Residue cysteine 92 is the Nucleophile of the active site. Cysteine 92 and cysteine 191 are oxidised to a cystine. Glycine 116 provides a ligand contact to ATP. An interaction with tRNA region spans residues 138–140 (KDQ). Cysteine 191 (cysteine persulfide intermediate) is an active-site residue. Residues 293 to 294 (RY) form an interaction with tRNA region.

The protein belongs to the MnmA/TRMU family.

It localises to the cytoplasm. It carries out the reaction S-sulfanyl-L-cysteinyl-[protein] + uridine(34) in tRNA + AH2 + ATP = 2-thiouridine(34) in tRNA + L-cysteinyl-[protein] + A + AMP + diphosphate + H(+). In terms of biological role, catalyzes the 2-thiolation of uridine at the wobble position (U34) of tRNA, leading to the formation of s(2)U34. The polypeptide is tRNA-specific 2-thiouridylase MnmA (Helicobacter acinonychis (strain Sheeba)).